The chain runs to 201 residues: Small ribosomal subunit protein uS4 (201 aa).

Positions 20–46 are disordered; that stretch reads SGTGKELSRRPYAPGQHGQDRRGSLSE. In terms of domain architecture, S4 RNA-binding spans 93–156; the sequence is RRLDNVVYRL…KDLQIVKEAL (64 aa).

This sequence belongs to the universal ribosomal protein uS4 family. In terms of assembly, part of the 30S ribosomal subunit. Contacts protein S5. The interaction surface between S4 and S5 is involved in control of translational fidelity.

In terms of biological role, one of the primary rRNA binding proteins, it binds directly to 16S rRNA where it nucleates assembly of the body of the 30S subunit. Its function is as follows. With S5 and S12 plays an important role in translational accuracy. The polypeptide is Small ribosomal subunit protein uS4 (Ligilactobacillus salivarius (strain UCC118) (Lactobacillus salivarius)).